A 147-amino-acid chain; its full sequence is Large ribosomal subunit protein bL21 (147 aa).

The tract at residues lysine 115–asparagine 147 is disordered. Residues serine 128 to asparagine 147 are compositionally biased toward basic and acidic residues.

The protein belongs to the bacterial ribosomal protein bL21 family. As to quaternary structure, part of the 50S ribosomal subunit. Contacts protein L20.

In terms of biological role, this protein binds to 23S rRNA in the presence of protein L20. The polypeptide is Large ribosomal subunit protein bL21 (Prochlorococcus marinus (strain MIT 9215)).